The chain runs to 366 residues: tRNA/tmRNA (uracil-C(5))-methyltransferase (366 aa).

S-adenosyl-L-methionine contacts are provided by Gln-190, Tyr-218, Asn-223, Glu-239, and Asp-299. Cys-324 serves as the catalytic Nucleophile. The active-site Proton acceptor is the Glu-358.

It belongs to the class I-like SAM-binding methyltransferase superfamily. RNA M5U methyltransferase family. TrmA subfamily.

The enzyme catalyses uridine(54) in tRNA + S-adenosyl-L-methionine = 5-methyluridine(54) in tRNA + S-adenosyl-L-homocysteine + H(+). It carries out the reaction uridine(341) in tmRNA + S-adenosyl-L-methionine = 5-methyluridine(341) in tmRNA + S-adenosyl-L-homocysteine + H(+). Its function is as follows. Dual-specificity methyltransferase that catalyzes the formation of 5-methyluridine at position 54 (m5U54) in all tRNAs, and that of position 341 (m5U341) in tmRNA (transfer-mRNA). In Klebsiella pneumoniae subsp. pneumoniae (strain ATCC 700721 / MGH 78578), this protein is tRNA/tmRNA (uracil-C(5))-methyltransferase.